Reading from the N-terminus, the 441-residue chain is Ribosomal protein uS12 methylthiotransferase RimO (441 aa).

Positions 8-118 constitute an MTTase N-terminal domain; it reads PKIGFVSLGC…VLQHVHHYVP (111 aa). [4Fe-4S] cluster contacts are provided by Cys-17, Cys-53, Cys-82, Cys-150, Cys-154, and Cys-157. Residues 136-373 form the Radical SAM core domain; it reads LTPRHYAYLK…MALQQQISAE (238 aa). Residues 376–441 enclose the TRAM domain; that stretch reads QEKVGREILV…DEYDLWGSLV (66 aa).

The protein belongs to the methylthiotransferase family. RimO subfamily. Requires [4Fe-4S] cluster as cofactor.

It is found in the cytoplasm. It carries out the reaction L-aspartate(89)-[ribosomal protein uS12]-hydrogen + (sulfur carrier)-SH + AH2 + 2 S-adenosyl-L-methionine = 3-methylsulfanyl-L-aspartate(89)-[ribosomal protein uS12]-hydrogen + (sulfur carrier)-H + 5'-deoxyadenosine + L-methionine + A + S-adenosyl-L-homocysteine + 2 H(+). Its function is as follows. Catalyzes the methylthiolation of an aspartic acid residue of ribosomal protein uS12. The polypeptide is Ribosomal protein uS12 methylthiotransferase RimO (Cronobacter sakazakii (strain ATCC BAA-894) (Enterobacter sakazakii)).